A 154-amino-acid chain; its full sequence is Anti-sigma-E factor RseA (154 aa).

Phosphothreonine; by PknB is present on T39. Zn(2+)-binding residues include H66, C70, and C73. The interval 104–154 is disordered; it reads SEIPRCPPEGPSKGSSGGSSQGPPDGAAAGFGDRFADGDGGNRGRQSRVRR. The span at 124–136 shows a compositional bias: low complexity; sequence QGPPDGAAAGFGD.

This sequence belongs to the zinc-associated anti-sigma factor (ZAS) superfamily. Interacts with cognate ECF RNA polymerase sigma factor SigE under reducing conditions; this inhibits the interaction of SigE with the RNA polymerase catalytic core. Zn(2+) serves as cofactor. Post-translationally, phosphorylated by PknB on Thr-39; can be dephosphorylated (at least in vitro) by PstP. Phosphorylation is the signal for subsequent degradation by the ClpC1-ClpP2 complex. In terms of processing, degraded following vancomycin treatment (surface stress) by a ClpC1-ClpP2 complex.

The protein localises to the cytoplasm. Its function is as follows. An anti-sigma factor for extracytoplasmic function (ECF) sigma factor SigE. ECF sigma factors are held in an inactive form by an anti-sigma factor. This Mycobacterium tuberculosis (strain ATCC 25618 / H37Rv) protein is Anti-sigma-E factor RseA (rseA).